The following is a 105-amino-acid chain: Flagellar transcriptional regulator FlhD (105 aa).

Belongs to the FlhD family. Homodimer; disulfide-linked. Forms a heterohexamer composed of two FlhC and four FlhD subunits. Each FlhC binds a FlhD dimer, forming a heterotrimer, and a hexamer assembles by dimerization of two heterotrimers.

The protein localises to the cytoplasm. Functionally, functions in complex with FlhC as a master transcriptional regulator that regulates transcription of several flagellar and non-flagellar operons by binding to their promoter region. Activates expression of class 2 flagellar genes, including fliA, which is a flagellum-specific sigma factor that turns on the class 3 genes. Also regulates genes whose products function in a variety of physiological pathways. The protein is Flagellar transcriptional regulator FlhD of Nitrosomonas eutropha (strain DSM 101675 / C91 / Nm57).